We begin with the raw amino-acid sequence, 428 residues long: Lysophosphatidic acid phosphatase type 6 (428 aa).

Residues M1–A32 constitute a mitochondrion transit peptide. The substrate binding stretch occupies residues R58–R168. H59 (nucleophile) is an active-site residue. D335 acts as the Proton donor in catalysis.

It belongs to the histidine acid phosphatase family. As to quaternary structure, monomer. Highly expressed in kidney, heart, small intestine, muscle, liver, prostate, testis, ovary and weakly expressed in thymus and colon.

The protein resides in the mitochondrion. The catalysed reaction is a phosphate monoester + H2O = an alcohol + phosphate. It carries out the reaction 1-(9Z-octadecenoyl)-sn-glycero-3-phosphate + H2O = 1-(9Z-octadecenoyl)-sn-glycerol + phosphate. Functionally, hydrolyzes lysophosphatidic acid (LPA) containing a medium length fatty acid chain to the corresponding monoacylglycerol. Has highest activity with lysophosphatidic acid containing myristate (C14:0), monounsaturated oleate (C18:1) or palmitate (C16:0), and lower activity with C18:0 and C6:0 lysophosphatidic acid. This chain is Lysophosphatidic acid phosphatase type 6 (ACP6), found in Homo sapiens (Human).